Consider the following 235-residue polypeptide: Probable GTP-binding protein EngB (235 aa).

One can recognise an EngB-type G domain in the interval 23–219 (QVPEIAFAGR…NDKIIELLGL (197 aa)). GTP is bound by residues 31-38 (GRSNAGKS), 58-62 (GRTQH), 92-95 (DLPG), 159-162 (TKSD), and 193-200 (FTAQMFSA). Serine 38 and threonine 60 together coordinate Mg(2+).

The protein belongs to the TRAFAC class TrmE-Era-EngA-EngB-Septin-like GTPase superfamily. EngB GTPase family. Mg(2+) is required as a cofactor.

Functionally, necessary for normal cell division and for the maintenance of normal septation. This chain is Probable GTP-binding protein EngB, found in Janthinobacterium sp. (strain Marseille) (Minibacterium massiliensis).